Reading from the N-terminus, the 344-residue chain is Sesquiterpene synthase 9 (344 aa).

Mg(2+) contacts are provided by Asp-88, Asn-224, Ser-228, and Glu-232. The short motif at 88 to 92 (DEYSD) is the DDXXD motif element. Positions 224–232 (NDMLSWNVE) match the NSE/DTE motif motif. The (2E,6E)-farnesyl diphosphate site is built by Arg-313 and Tyr-314.

This sequence belongs to the terpene synthase family. Mg(2+) is required as a cofactor.

In terms of biological role, terpene cyclase that catalyzes the cyclization of farnesyl diphosphate (FPP) to a single major sesquiterpene scaffold whose chemical structure is still unknown. The chain is Sesquiterpene synthase 9 from Postia placenta (strain ATCC 44394 / Madison 698-R) (Brown rot fungus).